The chain runs to 147 residues: Small ribosomal subunit protein uS5 (147 aa).

Residues 9-72 (FEEVIVDIGR…DDAFKNIVEV (64 aa)) form the S5 DRBM domain.

This sequence belongs to the universal ribosomal protein uS5 family. As to quaternary structure, part of the 30S ribosomal subunit. Contacts proteins S4 and S8.

With S4 and S12 plays an important role in translational accuracy. Functionally, located at the back of the 30S subunit body where it stabilizes the conformation of the head with respect to the body. This is Small ribosomal subunit protein uS5 from Campylobacter fetus subsp. fetus (strain 82-40).